The sequence spans 366 residues: Mitogen-activated protein kinase p38a (366 aa).

Residues 25–312 (YQDLQPVGSG…AEEALSHPYL (288 aa)) form the Protein kinase domain. ATP-binding positions include 31–39 (VGSGAYGQV) and K54. Catalysis depends on D154, which acts as the Proton acceptor. A Phosphothreonine modification is found at T184. A TXY motif is present at residues 184-186 (TGY). Y186 carries the phosphotyrosine modification.

It belongs to the protein kinase superfamily. CMGC Ser/Thr protein kinase family. MAP kinase subfamily. Mg(2+) is required as a cofactor. In terms of processing, dually phosphorylated on Thr-184 and Tyr-186, which activates the enzyme.

The protein resides in the nucleus. It carries out the reaction L-seryl-[protein] + ATP = O-phospho-L-seryl-[protein] + ADP + H(+). It catalyses the reaction L-threonyl-[protein] + ATP = O-phospho-L-threonyl-[protein] + ADP + H(+). With respect to regulation, activated by threonine and tyrosine phosphorylation by Mkk3 in response to environmental stress. Its function is as follows. Kinase involved in a signal transduction pathway. May down-regulate insect immunity gene expression after prolonged infection. The protein is Mitogen-activated protein kinase p38a of Drosophila melanogaster (Fruit fly).